A 387-amino-acid polypeptide reads, in one-letter code: Patatin-02 (387 aa).

An N-terminal signal peptide occupies residues 1 to 23 (MATTKSFLILIVMILATTSSTFA). A PNPLA domain is found at 32 to 230 (LSIDGGGIKG…TVADPALLSV (199 aa)). A GXGXXG motif is present at residues 36–41 (GGGIKG). Positions 75–79 (GTSTG) match the GXSXG motif. Ser-77 (nucleophile) is an active-site residue. Asn-115 carries N-linked (GlcNAc...) asparagine glycosylation. Asp-216 serves as the catalytic Proton acceptor. Positions 216–218 (DGA) match the DGA/G motif. The stretch at 361-385 (ETYEEALKRFAKLLSDRKKLRANKA) forms a coiled coil.

Belongs to the patatin family. Tuber and stolon.

The protein resides in the vacuole. Its function is as follows. Probable lipolytic acyl hydrolase (LAH), an activity which is thought to be involved in the response of tubers to pathogens. This is Patatin-02 from Solanum tuberosum (Potato).